A 315-amino-acid chain; its full sequence is Probable cell division protein WhiA (315 aa).

Positions 275–309 form a DNA-binding region, H-T-H motif; the sequence is TLKELGEMVSSGTVSKSGVNHRLRKIDEIADALRR.

This sequence belongs to the WhiA family.

Functionally, involved in cell division and chromosome segregation. The protein is Probable cell division protein WhiA of Lysinibacillus sphaericus (strain C3-41).